We begin with the raw amino-acid sequence, 347 residues long: NADH-ubiquinone oxidoreductase chain 2 (347 aa).

Transmembrane regions (helical) follow at residues 13 to 33 (IFAGTLITALSSHWFFTWVGL), 56 to 76 (AIKYFLTQATASMILLMAILF), 96 to 116 (LMIMMAMAMKLGMAPFHFWVP), 123 to 143 (PLTSGLLLLTWQKLAPISIMY), 149 to 169 (LNVSLLLTLSILSIMAGSWGG), 178 to 198 (ILAYSSITHMGWMMAVLPYNP), 201 to 221 (TILNLTIYIILTTTAFLLLNL), 247 to 267 (TLLSLGGLPPLTGFLPKWAII), 274 to 294 (NSLIIPTIMATITLLNLYFYL), and 326 to 346 (LPTLIALTTLLLPISPFMLMI).

The protein belongs to the complex I subunit 2 family. As to quaternary structure, core subunit of respiratory chain NADH dehydrogenase (Complex I) which is composed of 45 different subunits. Interacts with TMEM242.

It localises to the mitochondrion inner membrane. It catalyses the reaction a ubiquinone + NADH + 5 H(+)(in) = a ubiquinol + NAD(+) + 4 H(+)(out). In terms of biological role, core subunit of the mitochondrial membrane respiratory chain NADH dehydrogenase (Complex I) which catalyzes electron transfer from NADH through the respiratory chain, using ubiquinone as an electron acceptor. Essential for the catalytic activity and assembly of complex I. This chain is NADH-ubiquinone oxidoreductase chain 2, found in Homo sapiens (Human).